The primary structure comprises 544 residues: Chitin-inducible gibberellin-responsive protein 2 (544 aa).

Residues 1–123 (MADTPTSRMI…VGASCVTEDP (123 aa)) form a disordered region. Polar residues-rich tracts occupy residues 15-30 (NIPS…SDNP), 63-74 (SQATPNKYTLDS), and 86-101 (PSSQ…PLSQ). The 380-residue stretch at 165–544 (RMMGIPRGNL…RPLVVSSAWH (380 aa)) folds into the GRAS domain. The segment at 172–232 (GNLKELLIAC…VARLASSGIS (61 aa)) is leucine repeat I (LRI). Positions 251–316 (MHFLYEACPY…GGPPTVRITG (66 aa)) are VHIID. Positions 282–286 (IHIID) match the VHIID motif. Residues 332-364 (LVGRRLSHIASLCKVPFEFHPLAISGSKVEAAH) form a leucine repeat II (LRII) region. The segment at 373 to 467 (LAVNFTLELH…QHCLAREIVN (95 aa)) is PFYRE. An SAW region spans residues 470–544 (ACEGEERAER…RPLVVSSAWH (75 aa)).

Belongs to the GRAS family.

It is found in the nucleus. In terms of biological role, may play a regulatory role in the early step of oligosaccharide elicitor response, downstream of the membrane-associated high-affinity chitin-binding protein. This is Chitin-inducible gibberellin-responsive protein 2 (CIGR2) from Oryza sativa subsp. japonica (Rice).